Here is a 116-residue protein sequence, read N- to C-terminus: Peptidyl-tRNA hydrolase (116 aa).

The protein belongs to the PTH2 family.

The protein localises to the cytoplasm. The enzyme catalyses an N-acyl-L-alpha-aminoacyl-tRNA + H2O = an N-acyl-L-amino acid + a tRNA + H(+). In terms of biological role, the natural substrate for this enzyme may be peptidyl-tRNAs which drop off the ribosome during protein synthesis. In Methanococcus maripaludis (strain C7 / ATCC BAA-1331), this protein is Peptidyl-tRNA hydrolase.